Here is a 247-residue protein sequence, read N- to C-terminus: Dynein axonemal assembly factor 19 (247 aa).

Residues 12–32 (LEKELHSALQADRKYQRENDA) adopt a coiled-coil conformation.

The protein belongs to the DNAAF19/PR46b family. Homodimer. In terms of tissue distribution, expressed in all cells bearing motile cilia.

It is found in the cytoplasm. The protein resides in the cell projection. Its subcellular location is the cilium. It localises to the flagellum. Dynein-attachment factor required for cilia motility. The protein is Dynein axonemal assembly factor 19 (dnaaf19) of Danio rerio (Zebrafish).